The following is a 187-amino-acid chain: MVLEKRGVVKPEEGVRALLEHLGEDVTRPGVVDTPKRFVKALGELTRGLREPPPEVVFFPLEYDAEPGPVVIENISAVSLCEHHLLPILLSVSVAYIPGDGVPGLSKVIRLVKWAAARPIMQERFTEWLADLLMEKLRARAVAVEVCGVHMCSFIRGVRDEHHNMVTRAKRGDIDVKLRCRRPPLCR.

Zn(2+) contacts are provided by Cys-81, His-84, and Cys-152.

The protein belongs to the GTP cyclohydrolase I family. Homomer.

It carries out the reaction GTP + H2O = 7,8-dihydroneopterin 3'-triphosphate + formate + H(+). The protein operates within cofactor biosynthesis; 7,8-dihydroneopterin triphosphate biosynthesis; 7,8-dihydroneopterin triphosphate from GTP: step 1/1. The chain is GTP cyclohydrolase 1 from Pyrobaculum neutrophilum (strain DSM 2338 / JCM 9278 / NBRC 100436 / V24Sta) (Thermoproteus neutrophilus).